Consider the following 463-residue polypeptide: MSKLILSYRIGLGLVVGAAAGAVIYIVFRRNRKKTRKWTSKQNGYYSQKGDELDTSNNLQAIPGEADILTGSRGEQLDLLNRLDYVLSSIVELHQEVETLRSSLHGLAEDIVGEVRTHLEENQRTLRRRRFLPHRERTDSTGSSSIYFTATSGAAHTDAESEGGYSTAYAESDFERESSRASEAEEEDEVSCETIRTMRRDSVDLVTDDDDDEATTIATDPVDEELTLLLQKSDELHSGSTEQQREGFQLLLNNKLLYGDHQEFLWRLARSYSDMCTIAEDAQEKKSFASEGKEEAEAALQKGDQNAECHKWFAILCGQLSEHEGIQKRIQTGYLFKEHIEKAISLKPGDARCYYLLGRWCYEVSNLGWLERKTASALYENPPTATVHEALQNFLKAEDLTPGFSKAARVLIAKCYKDLGNNATAAHWLKLAADLPNVTQEDRESTTTIEEMLPATAEEELLV.

The Mitochondrial intermembrane segment spans residues 1–4 (MSKL). The helical transmembrane segment at 5–27 (ILSYRIGLGLVVGAAAGAVIYIV) threads the bilayer. The Cytoplasmic portion of the chain corresponds to 28-463 (FRRNRKKTRK…PATAEEELLV (436 aa)). Residues 146–161 (IYFTATSGAAHTDAES) carry the FFAT motif. The disordered stretch occupies residues 153–192 (GAAHTDAESEGGYSTAYAESDFERESSRASEAEEEDEVSC). Positions 173 to 183 (DFERESSRASE) are enriched in basic and acidic residues. Residues 279–302 (AEDAQEKKSFASEGKEEAEAALQK) are a coiled coil.

This sequence belongs to the RMDN family. As to quaternary structure, interacts with PTPN2. Interacts with microtubules. Interacts with VAPB. Interacts (FFAT motif) with MOSPD2 (via MSP domain).

The protein localises to the mitochondrion outer membrane. It is found in the cytoplasm. The protein resides in the nucleus. Its subcellular location is the cytoskeleton. It localises to the spindle. The protein localises to the spindle pole. Involved in cellular calcium homeostasis regulation. In Xenopus laevis (African clawed frog), this protein is Regulator of microtubule dynamics protein 3 (rmdn3).